The following is a 507-amino-acid chain: Ribosomal protein uS12 methylthiotransferase RimO (507 aa).

An MTTase N-terminal domain is found at 13-124 (RRVALLTLGC…ISDRLGAVLA (112 aa)). [4Fe-4S] cluster is bound by residues Cys-22, Cys-58, and Cys-87. Residues 150–175 (AAVSLPGHGTRAAAAGPGGRSAPVEV) form a disordered region. A compositionally biased stretch (low complexity) spans 155–172 (PGHGTRAAAAGPGGRSAP). Residues 191–422 (LDTGPVASLK…ALADELCAQR (232 aa)) enclose the Radical SAM core domain. Positions 205, 209, and 212 each coordinate [4Fe-4S] cluster. Residues 424–497 (EQRLGSTVQV…GVDLVAVPDG (74 aa)) form the TRAM domain.

It belongs to the methylthiotransferase family. RimO subfamily. It depends on [4Fe-4S] cluster as a cofactor.

It is found in the cytoplasm. The catalysed reaction is L-aspartate(89)-[ribosomal protein uS12]-hydrogen + (sulfur carrier)-SH + AH2 + 2 S-adenosyl-L-methionine = 3-methylsulfanyl-L-aspartate(89)-[ribosomal protein uS12]-hydrogen + (sulfur carrier)-H + 5'-deoxyadenosine + L-methionine + A + S-adenosyl-L-homocysteine + 2 H(+). Functionally, catalyzes the methylthiolation of an aspartic acid residue of ribosomal protein uS12. The polypeptide is Ribosomal protein uS12 methylthiotransferase RimO (Salinispora arenicola (strain CNS-205)).